The chain runs to 388 residues: Succinate--CoA ligase [ADP-forming] subunit beta (388 aa).

The 236-residue stretch at 9–244 folds into the ATP-grasp domain; the sequence is KQLFKEFGLP…PSQDDAREAE (236 aa). ATP contacts are provided by residues lysine 46, 53–55, glutamate 99, threonine 102, and glutamate 107; that span reads GRG. 2 residues coordinate Mg(2+): asparagine 199 and aspartate 213. Substrate contacts are provided by residues asparagine 264 and 321-323; that span reads GIV.

The protein belongs to the succinate/malate CoA ligase beta subunit family. Heterotetramer of two alpha and two beta subunits. The cofactor is Mg(2+).

It catalyses the reaction succinate + ATP + CoA = succinyl-CoA + ADP + phosphate. The enzyme catalyses GTP + succinate + CoA = succinyl-CoA + GDP + phosphate. It participates in carbohydrate metabolism; tricarboxylic acid cycle; succinate from succinyl-CoA (ligase route): step 1/1. Its function is as follows. Succinyl-CoA synthetase functions in the citric acid cycle (TCA), coupling the hydrolysis of succinyl-CoA to the synthesis of either ATP or GTP and thus represents the only step of substrate-level phosphorylation in the TCA. The beta subunit provides nucleotide specificity of the enzyme and binds the substrate succinate, while the binding sites for coenzyme A and phosphate are found in the alpha subunit. The sequence is that of Succinate--CoA ligase [ADP-forming] subunit beta from Idiomarina loihiensis (strain ATCC BAA-735 / DSM 15497 / L2-TR).